Reading from the N-terminus, the 458-residue chain is Adenylosuccinate synthetase (458 aa).

GTP is bound by residues 17-23 (GDEGKGK) and 45-47 (GHT). Aspartate 18 serves as the catalytic Proton acceptor. The Mg(2+) site is built by aspartate 18 and glycine 45. Residues 18–21 (DEGK), 43–46 (NAGH), threonine 137, arginine 151, glutamine 247, threonine 262, and arginine 330 contribute to the IMP site. The active-site Proton donor is histidine 46. 326–332 (VTTGRSR) contributes to the substrate binding site. GTP is bound by residues arginine 332, 358–360 (KLD), and 440–442 (STS).

The protein belongs to the adenylosuccinate synthetase family. In terms of assembly, homodimer. Mg(2+) serves as cofactor.

The protein localises to the cytoplasm. The catalysed reaction is IMP + L-aspartate + GTP = N(6)-(1,2-dicarboxyethyl)-AMP + GDP + phosphate + 2 H(+). It functions in the pathway purine metabolism; AMP biosynthesis via de novo pathway; AMP from IMP: step 1/2. In terms of biological role, plays an important role in the de novo pathway of purine nucleotide biosynthesis. Catalyzes the first committed step in the biosynthesis of AMP from IMP. This chain is Adenylosuccinate synthetase, found in Verminephrobacter eiseniae (strain EF01-2).